The sequence spans 1499 residues: DNA-directed RNA polymerase subunit beta' (1499 aa).

Positions 67, 69, 82, and 85 each coordinate Zn(2+). 3 residues coordinate Mg(2+): D499, D501, and D503. Residues C867, C943, C950, and C953 each contribute to the Zn(2+) site.

The protein belongs to the RNA polymerase beta' chain family. In terms of assembly, the RNAP catalytic core consists of 2 alpha, 1 beta, 1 beta' and 1 omega subunit. When a sigma factor is associated with the core the holoenzyme is formed, which can initiate transcription. Requires Mg(2+) as cofactor. Zn(2+) is required as a cofactor.

It catalyses the reaction RNA(n) + a ribonucleoside 5'-triphosphate = RNA(n+1) + diphosphate. Its function is as follows. DNA-dependent RNA polymerase catalyzes the transcription of DNA into RNA using the four ribonucleoside triphosphates as substrates. This chain is DNA-directed RNA polymerase subunit beta', found in Prosthecochloris aestuarii (strain DSM 271 / SK 413).